The sequence spans 721 residues: MDAANLVMKSSMFSKSPCPVFGSKLIPRAPPSVFTLPSTFRPLVKCIQASFPQNPDSKIPSNNSTFTCSAVTSFPSQQSQPHATSDAKLQLLISEFQSLVEPMDRVKRLLHYSTLIPSMDASLKTPENRVLGCTTQVWLHVSFDEAENRMKFVADSDSDITKGFCACLVSLLDGATPDEVLALKTEDLNALNVAGLNGKGSASRANTWHNVLVSMQKRTRALVAEREGRPRNELFPSLVITADGIQPQGSYAEAQARFLFPDESRVQELASLLKEKKIGVVAHFYMDPEVQGVLTAAQKLWPHIHISDSLVMADKAVSMAKAGCEYISVLGVDFMSENVRAILDLAGFPEVGVYRMSDERIGCSLADAAASPAYLDYLKTASTSSPSLHVVYINTSLETKAYSHELVPTITCTSSNVVQTILQAFAEVPDLEVLYGPDTYMGSNIAELFTQMSTMTDEEISEIHPLHNRSSIKSLLPRLHYFQDGTCIVHHLFGHEVVENINEMYGDAFLTAHFEVPGEMFSLAMEAKKRGMGVVGSTSNILDFIKERVEEALNRNVDEHLQFVLGTESGMITAIVAAVGKLLGSADTSSGGAKVSVEIVFPVSSESVTRTSTGSSLDQNKVNIIPGVASGEGCSLHGGCASCPYMKMNSLSSLLRVCQSLPHGKAELSAYEAGRFSLQTPNGKQIADVGCEPVLHMRHFQATKRLPEQLINQILQRSSSA.

Residues 1-67 (MDAANLVMKS…KIPSNNSTFT (67 aa)) constitute a chloroplast transit peptide. The active-site Cysteine persulfide intermediate is Cys133. Iminosuccinate-binding residues include His283 and Ser309. Cys363 is a [4Fe-4S] cluster binding site. Residues 392 to 394 (YIN) and Ser414 contribute to the iminosuccinate site. Cys487 provides a ligand contact to [4Fe-4S] cluster. Residues 513–515 (HFE) and Thr538 contribute to the iminosuccinate site. Cys643 is a binding site for [4Fe-4S] cluster.

Belongs to the quinolinate synthase family. Type 1 subfamily. In terms of assembly, homodimer. [4Fe-4S] cluster serves as cofactor.

It is found in the plastid. The protein resides in the chloroplast. The catalysed reaction is iminosuccinate + dihydroxyacetone phosphate = quinolinate + phosphate + 2 H2O + H(+). It participates in alkaloid biosynthesis; nicotine biosynthesis. It functions in the pathway cofactor biosynthesis; NAD(+) biosynthesis; quinolinate from iminoaspartate: step 1/1. In terms of biological role, involved in the biosynthesis of pyridine alkaloid natural products, leading mainly to the production of anabasine, anatabine, nicotine and nornicotine, effective deterrents against herbivores with antiparasitic and pesticide properties (neurotoxins); nornicotine serves as the precursor in the synthesis of the carcinogen compound N'-nitrosonornicotine (NNN). Catalyzes the condensation of iminoaspartate with dihydroxyacetone phosphate to form quinolinate. The sequence is that of Quinolinate synthase, chloroplastic from Nicotiana tabacum (Common tobacco).